Reading from the N-terminus, the 90-residue chain is DNA-binding protein HU (90 aa).

Phosphothreonine is present on Thr4. The disordered stretch occupies residues 56 to 90 (AARKGRNPQTGEEMEIPASKVPAFKPGKALKDAVK).

The protein belongs to the bacterial histone-like protein family. As to quaternary structure, homodimer.

Its function is as follows. Histone-like DNA-binding protein which is capable of wrapping DNA to stabilize it, and thus to prevent its denaturation under extreme environmental conditions. The protein is DNA-binding protein HU (hup) of Geobacillus stearothermophilus (Bacillus stearothermophilus).